Consider the following 364-residue polypeptide: tRNA 2-selenouridine synthase (364 aa).

Residues 14 to 137 (LLADTPLIDV…LRQTAIQATW (124 aa)) form the Rhodanese domain. Cys97 functions as the S-selanylcysteine intermediate in the catalytic mechanism.

It belongs to the SelU family. In terms of assembly, monomer.

It carries out the reaction 5-methylaminomethyl-2-thiouridine(34) in tRNA + selenophosphate + (2E)-geranyl diphosphate + H2O + H(+) = 5-methylaminomethyl-2-selenouridine(34) in tRNA + (2E)-thiogeraniol + phosphate + diphosphate. The enzyme catalyses 5-methylaminomethyl-2-thiouridine(34) in tRNA + (2E)-geranyl diphosphate = 5-methylaminomethyl-S-(2E)-geranyl-thiouridine(34) in tRNA + diphosphate. The catalysed reaction is 5-methylaminomethyl-S-(2E)-geranyl-thiouridine(34) in tRNA + selenophosphate + H(+) = 5-methylaminomethyl-2-(Se-phospho)selenouridine(34) in tRNA + (2E)-thiogeraniol. It catalyses the reaction 5-methylaminomethyl-2-(Se-phospho)selenouridine(34) in tRNA + H2O = 5-methylaminomethyl-2-selenouridine(34) in tRNA + phosphate. Involved in the post-transcriptional modification of the uridine at the wobble position (U34) of tRNA(Lys), tRNA(Glu) and tRNA(Gln). Catalyzes the conversion of 2-thiouridine (S2U-RNA) to 2-selenouridine (Se2U-RNA). Acts in a two-step process involving geranylation of 2-thiouridine (S2U) to S-geranyl-2-thiouridine (geS2U) and subsequent selenation of the latter derivative to 2-selenouridine (Se2U) in the tRNA chain. The sequence is that of tRNA 2-selenouridine synthase from Salmonella paratyphi B (strain ATCC BAA-1250 / SPB7).